The primary structure comprises 244 residues: MMAFRASVLTLYPEMFPGHLGFSLAGKAMERGQWSLDTVQIRDFATDRHRTVDDTPAGGGAGMVLKADVLARAIDSASETDTRPRLLMSPRGRPLTQERVRELAAGDGVIIVCGRFEGVDQRVIEARGLEEVSIGDYVLSGGEPAALTVLDAIVRILPGVMGNDLSGLHESFEGGLLEHPHYTRPQEWEGREIPAILTSGNHGAIEKWRHQEAVRLTRERRPDLLEKAGASPGKSGSNFGKHDA.

Residues Gly-114 and 134 to 139 (IGDYVL) contribute to the S-adenosyl-L-methionine site. Residues 220 to 244 (RRPDLLEKAGASPGKSGSNFGKHDA) form a disordered region.

It belongs to the RNA methyltransferase TrmD family. Homodimer.

It localises to the cytoplasm. It carries out the reaction guanosine(37) in tRNA + S-adenosyl-L-methionine = N(1)-methylguanosine(37) in tRNA + S-adenosyl-L-homocysteine + H(+). Its function is as follows. Specifically methylates guanosine-37 in various tRNAs. This Rhizobium johnstonii (strain DSM 114642 / LMG 32736 / 3841) (Rhizobium leguminosarum bv. viciae) protein is tRNA (guanine-N(1)-)-methyltransferase.